The primary structure comprises 61 residues: Small ribosomal subunit protein uS14B (61 aa).

The Zn(2+) site is built by cysteine 24, cysteine 27, cysteine 40, and cysteine 43.

The protein belongs to the universal ribosomal protein uS14 family. Zinc-binding uS14 subfamily. Part of the 30S ribosomal subunit. Contacts proteins S3 and S10. Zn(2+) serves as cofactor.

In terms of biological role, binds 16S rRNA, required for the assembly of 30S particles and may also be responsible for determining the conformation of the 16S rRNA at the A site. This Listeria welshimeri serovar 6b (strain ATCC 35897 / DSM 20650 / CCUG 15529 / CIP 8149 / NCTC 11857 / SLCC 5334 / V8) protein is Small ribosomal subunit protein uS14B.